Reading from the N-terminus, the 357-residue chain is UDP-N-acetylglucosamine 2-epimerase homolog (357 aa).

The protein belongs to the UDP-N-acetylglucosamine 2-epimerase family.

The sequence is that of UDP-N-acetylglucosamine 2-epimerase homolog from Methanococcus maripaludis (strain DSM 14266 / JCM 13030 / NBRC 101832 / S2 / LL).